The chain runs to 531 residues: NADH-quinone oxidoreductase subunit N (531 aa).

The next 14 helical transmembrane spans lie at 8-28 (VEYF…AGVL), 41-61 (AQVT…IVVA), 81-101 (ATLF…VFMA), 146-166 (GATQ…MMVF), 172-192 (LLTM…MCGL), 208-228 (FLLG…LYGA), 250-270 (ALAG…AVPF), 282-302 (PTPI…GALL), 318-338 (PVLW…AVNQ), 350-370 (VAHV…GLSA), 372-392 (LFYL…VGLV), 418-438 (IVGV…LTSG), 453-473 (GAVP…YFYV), and 500-520 (AAIA…QPVL).

The protein belongs to the complex I subunit 2 family. In terms of assembly, NDH-1 is composed of 14 different subunits. Subunits NuoA, H, J, K, L, M, N constitute the membrane sector of the complex.

The protein localises to the cell membrane. The enzyme catalyses a quinone + NADH + 5 H(+)(in) = a quinol + NAD(+) + 4 H(+)(out). Its function is as follows. NDH-1 shuttles electrons from NADH, via FMN and iron-sulfur (Fe-S) centers, to quinones in the respiratory chain. The immediate electron acceptor for the enzyme in this species is believed to be a menaquinone. Couples the redox reaction to proton translocation (for every two electrons transferred, four hydrogen ions are translocated across the cytoplasmic membrane), and thus conserves the redox energy in a proton gradient. This chain is NADH-quinone oxidoreductase subunit N, found in Mycobacterium bovis (strain ATCC BAA-935 / AF2122/97).